We begin with the raw amino-acid sequence, 655 residues long: p-hydroxybenzoic acid efflux pump subunit AaeB (655 aa).

11 helical membrane passes run 13–33, 38–58, 69–89, 93–113, 121–141, 152–172, 370–390, 407–427, 431–451, 459–479, and 482–502; these read FAVK…HFQL, WAVL…GGEP, LRII…IAMI, LLMI…SSLV, WGLA…EPLL, EIVI…PRSI, LFWL…IAVV, FIYG…VIIP, QSML…GIEV, MGAL…TFHF, and FLDS…VILL.

It belongs to the aromatic acid exporter ArAE (TC 2.A.85) family.

It is found in the cell inner membrane. In terms of biological role, forms an efflux pump with AaeA. Could function as a metabolic relief valve, allowing to eliminate certain compounds when they accumulate to high levels in the cell. The sequence is that of p-hydroxybenzoic acid efflux pump subunit AaeB from Escherichia coli O7:K1 (strain IAI39 / ExPEC).